The sequence spans 694 residues: Ribonuclease R (694 aa).

Positions 204–525 constitute an RNB domain; that stretch reads RKDLRDLLCF…IVHRLLFHPL (322 aa). One can recognise an S1 motif domain in the interval 571–648; the sequence is ATLYKAFIIT…LTQSIEWTLV (78 aa). Residues 652-694 form a disordered region; it reads TKAKAKRTSKKKKTESVTTKEKKKSPAKKKKGATKTKKGSGKN. 2 stretches are compositionally biased toward basic residues: residues 654–664 and 672–694; these read AKAKRTSKKKK and EKKKSPAKKKKGATKTKKGSGKN.

The protein belongs to the RNR ribonuclease family. RNase R subfamily.

The protein resides in the cytoplasm. The enzyme catalyses Exonucleolytic cleavage in the 3'- to 5'-direction to yield nucleoside 5'-phosphates.. In terms of biological role, 3'-5' exoribonuclease that releases 5'-nucleoside monophosphates and is involved in maturation of structured RNAs. The chain is Ribonuclease R from Chlamydia trachomatis serovar D (strain ATCC VR-885 / DSM 19411 / UW-3/Cx).